We begin with the raw amino-acid sequence, 258 residues long: Ribosomal RNA small subunit methyltransferase J (258 aa).

Residues glutamate 123 to arginine 124 and aspartate 177 contribute to the S-adenosyl-L-methionine site. Residues isoleucine 232–alanine 258 are disordered. Positions histidine 239–proline 252 are enriched in basic and acidic residues.

This sequence belongs to the methyltransferase superfamily. RsmJ family.

The protein localises to the cytoplasm. The enzyme catalyses guanosine(1516) in 16S rRNA + S-adenosyl-L-methionine = N(2)-methylguanosine(1516) in 16S rRNA + S-adenosyl-L-homocysteine + H(+). Functionally, specifically methylates the guanosine in position 1516 of 16S rRNA. This chain is Ribosomal RNA small subunit methyltransferase J, found in Pseudomonas putida (strain W619).